We begin with the raw amino-acid sequence, 121 residues long: Nitrogen fixation nifHD region glnB-like protein 2 (121 aa).

It belongs to the P(II) protein family.

In terms of biological role, could be involved in the regulation of nitrogen fixation. This Methanococcus maripaludis (Methanococcus deltae) protein is Nitrogen fixation nifHD region glnB-like protein 2 (glnBII).